The sequence spans 227 residues: Transcription elongation factor A protein-like 2 (227 aa).

Disordered stretches follow at residues 1-145 (MEKL…TNKG) and 202-227 (FYPR…IPYV). Composition is skewed to basic and acidic residues over residues 18–43 (IDNE…KLEN), 50–82 (TGKR…KGKS), 90–113 (TEGK…REPE), 120–136 (SETR…DIPR), and 206–227 (GPRE…IPYV).

The protein belongs to the TFS-II family. TFA subfamily.

The protein resides in the nucleus. Functionally, may be involved in transcriptional regulation. This chain is Transcription elongation factor A protein-like 2 (TCEAL2), found in Homo sapiens (Human).